Here is a 354-residue protein sequence, read N- to C-terminus: NADPH dehydrogenase (354 aa).

Residues Ser23, Pro24, Cys26, Ala58, and Gln100 each contribute to the FMN site. Tyr182 functions as the Proton donor in the catalytic mechanism. 4 residues coordinate FMN: Arg230, Leu301, Gly323, and Arg324.

It belongs to the NADH:flavin oxidoreductase/NADH oxidase family. NamA subfamily. In terms of assembly, homodimer. Behaves as an active monomer in solution while in the crystal packing assembles following the classical dimeric architecture of other thermophilic-like ene-reductases. FMN is required as a cofactor.

The catalysed reaction is A + NADPH + H(+) = AH2 + NADP(+). Ene-reductase that catalyzes the stereoselective reduction of activated C-C double bonds. Shows very good activity with 4-ketoisophorone, 2-cyclohexen-1-one and 1-octen-3-one, and low activity with maleimide, 2-methyl-pentenal, 2-methyl-cyclohexen-1-one, 2-cyclopenten-1-one and trans-2-hexen-1-al. Shows the highest catalytic efficiency with ketoisophorone. Exhibits a restricted substrate spectrum with generally lower activities compared to other ene-reductases. In Chloroflexus aggregans (strain MD-66 / DSM 9485), this protein is NADPH dehydrogenase.